We begin with the raw amino-acid sequence, 275 residues long: Lectin (275 aa).

The first 30 residues, 1–30 (MASLQTQMISFYLIFLSILLTTIFFFKVNS), serve as a signal peptide directing secretion. 2 residues coordinate D-glucose: D111 and G129. E149 and D151 together coordinate Mn(2+). Residues D151, F153, N155, and D159 each contribute to the Ca(2+) site. Positions 159 and 166 each coordinate Mn(2+). Residues 211–217 (NSLEEEN) constitute a propeptide that is removed on maturation. Residues G246 and A247 each contribute to the D-glucose site. Positions 270-275 (KQAADA) are excised as a propeptide.

The protein belongs to the leguminous lectin family. As to quaternary structure, heterotetramer of two alpha and two beta chains. In terms of processing, the mature form consists of two chains, alpha and beta, produced by cleavage of the immature protein. These remain cleaved, yet fold together to form one subunit.

In terms of biological role, D-mannose specific lectin. The polypeptide is Lectin (Lens culinaris subsp. tomentosus (Lentil)).